The sequence spans 430 residues: Enolase (430 aa).

Gln165 contributes to the (2R)-2-phosphoglycerate binding site. The Proton donor role is filled by Glu207. Residues Asp244, Glu287, and Asp314 each coordinate Mg(2+). Lys339, Arg368, Ser369, and Lys390 together coordinate (2R)-2-phosphoglycerate. Lys339 (proton acceptor) is an active-site residue.

Belongs to the enolase family. Component of the RNA degradosome, a multiprotein complex involved in RNA processing and mRNA degradation. Requires Mg(2+) as cofactor.

It localises to the cytoplasm. The protein resides in the secreted. It is found in the cell surface. It catalyses the reaction (2R)-2-phosphoglycerate = phosphoenolpyruvate + H2O. Its pathway is carbohydrate degradation; glycolysis; pyruvate from D-glyceraldehyde 3-phosphate: step 4/5. Its function is as follows. Catalyzes the reversible conversion of 2-phosphoglycerate (2-PG) into phosphoenolpyruvate (PEP). It is essential for the degradation of carbohydrates via glycolysis. The protein is Enolase of Stenotrophomonas maltophilia (strain K279a).